Here is a 391-residue protein sequence, read N- to C-terminus: DNA repair protein NreB (391 aa).

The C4-type zinc-finger motif lies at 3–17 (CIECRGRMLCSRKVC). A PIP motif motif is present at residues 384-391 (QRTLWEFM).

The protein belongs to the Nre family. As to quaternary structure, interacts with the DNA polymerase sliding clamp (PCNA) via the PIP (PCNA-interacting peptide) motif.

In terms of biological role, involved in DNA damage repair. This chain is DNA repair protein NreB, found in Archaeoglobus fulgidus (strain ATCC 49558 / DSM 4304 / JCM 9628 / NBRC 100126 / VC-16).